Consider the following 155-residue polypeptide: Aspartate carbamoyltransferase regulatory chain (155 aa).

Cys-113, Cys-118, Cys-139, and Cys-142 together coordinate Zn(2+).

Belongs to the PyrI family. In terms of assembly, contains catalytic and regulatory chains. The cofactor is Zn(2+).

In terms of biological role, involved in allosteric regulation of aspartate carbamoyltransferase. In Methanospirillum hungatei JF-1 (strain ATCC 27890 / DSM 864 / NBRC 100397 / JF-1), this protein is Aspartate carbamoyltransferase regulatory chain.